The sequence spans 88 residues: Gas vesicle protein A2 (88 aa).

It belongs to the gas vesicle GvpA family. The gas vesicle shell is 2 nm thick and consists of a single layer of this protein. It forms helical ribs nearly perpendicular to the long axis of the vesicle.

The protein localises to the gas vesicle shell. In terms of biological role, gas vesicles are hollow, gas filled proteinaceous nanostructures found in some microorganisms. During planktonic growth they allow positioning of the organism at a favorable depth for light or nutrient acquisition. GvpA forms the protein shell. It is not clear if the 2 type A proteins in this organism are functionally redundant. Functionally, when a minimal gvp locus (gvpA2-gvpR-gvpN-gvpF-gvpG-gvpL-gvpS-gvpK-gvpJ-gvpT-gvpU, called pNL29) is expressed in E.coli gas vesicles are made. In Priestia megaterium (Bacillus megaterium), this protein is Gas vesicle protein A2.